The following is a 474-amino-acid chain: MVFGNEMCDETPHPGECKTLLIKHKPIRSTTQFLQVSVERTLDGAVKAKSDTYFLEPQFGSKQAWEECMDLYEQTIHRLNESVLCPKNVCSRSDVQAWLSTALTNLDTCQEEMSELGVSSHSLESITIDVINTLAINKRMEQNGKEFGISKITMKTLSIGEKVDVVVAQDGSGDYKTIQEAVNGAGERLKGSPRYVIHVKQGVYEEYVNVGIKSNNIMITGDGIGKTIITGDKSKGRGFSTYKSATFVAEGDGFVGRDITIRNTAGPENHQAVALRSNSDMSVFYRCSIEGYQDTLYVHSGRQFFRECDIYGTVDFIFGNAAAVLQNCRIFARNPPNGVNTITAQSRFNPNQTTGIVIHNSVVKGAPGVQLGGVKTYLGRPWRSYARTVVIGTYLDTLIEPNGWIDWDNVTALSTLYYGEYQNSGPGSGTENRVDWAGFHVISDIQEAREFTLPKFIDSASWLPPTKVPFTINL.

The tract at residues 1-130 (MVFGNEMCDE…HSLESITIDV (130 aa)) is pectinesterase inhibitor 38. Residue Asn80 is glycosylated (N-linked (GlcNAc...) asparagine). Positions 164–461 (DVVVAQDGSG…TLPKFIDSAS (298 aa)) are pectinesterase 38. Residues Thr241 and Gln271 each contribute to the substrate site. Asp294 functions as the Proton donor; for pectinesterase activity in the catalytic mechanism. A disulfide bridge links Cys308 with Cys328. Residue Asp315 is the Nucleophile; for pectinesterase activity of the active site. N-linked (GlcNAc...) asparagine glycosylation occurs at Asn351. Positions 380 and 382 each coordinate substrate. Asn409 carries an N-linked (GlcNAc...) asparagine glycan.

It in the N-terminal section; belongs to the PMEI family. In the C-terminal section; belongs to the pectinesterase family.

The protein localises to the secreted. The protein resides in the cell wall. It carries out the reaction [(1-&gt;4)-alpha-D-galacturonosyl methyl ester](n) + n H2O = [(1-&gt;4)-alpha-D-galacturonosyl](n) + n methanol + n H(+). Its pathway is glycan metabolism; pectin degradation; 2-dehydro-3-deoxy-D-gluconate from pectin: step 1/5. Functionally, acts in the modification of cell walls via demethylesterification of cell wall pectin. The protein is Putative pectinesterase/pectinesterase inhibitor 38 (PME38) of Arabidopsis thaliana (Mouse-ear cress).